Here is a 206-residue protein sequence, read N- to C-terminus: Small ribosomal subunit protein uS4 (206 aa).

The S4 RNA-binding domain maps to 96 to 158 (SRLDNVVYRM…AKKQSRIKAA (63 aa)).

Belongs to the universal ribosomal protein uS4 family. As to quaternary structure, part of the 30S ribosomal subunit. Contacts protein S5. The interaction surface between S4 and S5 is involved in control of translational fidelity.

In terms of biological role, one of the primary rRNA binding proteins, it binds directly to 16S rRNA where it nucleates assembly of the body of the 30S subunit. With S5 and S12 plays an important role in translational accuracy. This Wigglesworthia glossinidia brevipalpis protein is Small ribosomal subunit protein uS4.